A 348-amino-acid polypeptide reads, in one-letter code: MAIPETQKGVIFYEHGGELQYKDIPVPKPKPNELLINVKYSGVCHTDLHAWQGDWPLDTKLPLVGGHEGAGIVVAMGENVTGWEIGDYAGIKWLNGSCMSCEECELSNEPNCPKADLSGYTHDGSFQQYATADAVQAARIPKNVDLAEVAPILCAGVTVYKALKSAHIKAGDWVAISGACGGLGSLAIQYAKAMGYRVLGIDAGDEKAKLFKELGGEYFIDFTKTKDMVAEVIEATNGVAHAVINVSVSEAAISTSVLYTRSNGTVVLVGLPRDAQCKSDVFNQVVKSISIVGSYVGNRADTREALDFFSRGLVKAPIKILGLSELASVYDKMVKGQIVGRIVVDTSK.

Cys44, His67, Cys98, Cys101, Cys104, Cys112, and Cys154 together coordinate Zn(2+). Residues 178–184 (GACGGLG), Asp202, Lys207, 269–271 (VGL), and Arg341 contribute to the NAD(+) site.

It belongs to the zinc-containing alcohol dehydrogenase family. As to quaternary structure, homotetramer. Requires Zn(2+) as cofactor.

The protein localises to the cytoplasm. The enzyme catalyses a primary alcohol + NAD(+) = an aldehyde + NADH + H(+). The catalysed reaction is a secondary alcohol + NAD(+) = a ketone + NADH + H(+). The polypeptide is Alcohol dehydrogenase 1 (ADH1) (Kluyveromyces marxianus (Yeast)).